The sequence spans 578 residues: 65-kDa microtubule-associated protein 2 (578 aa).

Coiled-coil stretches lie at residues 64–84 (AELLQTLSDATVELSNLTTAL), 151–184 (DETDLSLKRLDDFQRKLQELQKEKSDRLQKVLEF), 235–257 (TLKEDKMQRLKKLQELATQLTDL), 290–312 (ALALDLIEQAEVEVDRLDQLKSS), and 461–489 (AMLDEYTMLRQEREDEKRRLKEQKKQQEQ). The span at 473-494 (REDEKRRLKEQKKQQEQPHTDQ) shows a compositional bias: basic and acidic residues. The segment at 473–578 (REDEKRRLKE…SRADPVMASP (106 aa)) is disordered. 2 positions are modified to phosphoserine: S503 and S532. Positions 549-558 (KIASPSNIVA) are enriched in polar residues. A phosphoserine mark is found at S566, S569, and S577.

It belongs to the MAP65/ASE1 family. In terms of assembly, forms a dimer. Binds to microtubules (MT). Bundles polymerized MT via the formation of 25-nm crossbridges with centrally located endocytic MT.

It localises to the nucleus. The protein resides in the cytoplasm. Its subcellular location is the cytoskeleton. It is found in the spindle pole. The protein localises to the phragmoplast. Functionally, microtubule-associated protein that stabilize microtubules (MT). Involved in the regulation of MT organization and dynamics. Confers MT resistance to the drug propyzamide and cold conditions. In Arabidopsis thaliana (Mouse-ear cress), this protein is 65-kDa microtubule-associated protein 2 (MAP65-2).